The sequence spans 287 residues: Glutamate racemase (287 aa).

Residues 32 to 33 and 64 to 65 contribute to the substrate site; these read DS and YG. Cysteine 96 (proton donor/acceptor) is an active-site residue. Position 97–98 (97–98) interacts with substrate; it reads NT. Cysteine 208 functions as the Proton donor/acceptor in the catalytic mechanism. 209–210 is a substrate binding site; the sequence is TH.

It belongs to the aspartate/glutamate racemases family.

The catalysed reaction is L-glutamate = D-glutamate. It functions in the pathway cell wall biogenesis; peptidoglycan biosynthesis. Its function is as follows. Provides the (R)-glutamate required for cell wall biosynthesis. The polypeptide is Glutamate racemase (Serratia proteamaculans (strain 568)).